Consider the following 431-residue polypeptide: Putative serine/threonine-protein kinase B (431 aa).

The Protein kinase domain maps to 20–279; it reads YLNKGIVGLG…VRENFQIPYI (260 aa). ATP contacts are provided by residues 26–34 and K49; that span reads VGLGSYGEG. D147 serves as the catalytic Proton acceptor. Positions 331 to 429 constitute a PH domain; the sequence is DVTHRGHVNK…WVHAIQRGIG (99 aa).

The protein belongs to the protein kinase superfamily. Ser/Thr protein kinase family.

The catalysed reaction is L-seryl-[protein] + ATP = O-phospho-L-seryl-[protein] + ADP + H(+). It carries out the reaction L-threonyl-[protein] + ATP = O-phospho-L-threonyl-[protein] + ADP + H(+). This Trypanosoma brucei brucei protein is Putative serine/threonine-protein kinase B (NRKB).